Consider the following 959-residue polypeptide: Isoleucine--tRNA ligase (959 aa).

Residues 66–76 (PYANGDLHIGH) carry the 'HIGH' region motif. Glu592 is an L-isoleucyl-5'-AMP binding site. Positions 633–637 (KMSKS) match the 'KMSKS' region motif. Residue Lys636 coordinates ATP. Zn(2+) is bound by residues Cys922, Cys925, Cys942, and Cys945.

It belongs to the class-I aminoacyl-tRNA synthetase family. IleS type 1 subfamily. In terms of assembly, monomer. Zn(2+) is required as a cofactor.

The protein localises to the cytoplasm. The enzyme catalyses tRNA(Ile) + L-isoleucine + ATP = L-isoleucyl-tRNA(Ile) + AMP + diphosphate. Functionally, catalyzes the attachment of isoleucine to tRNA(Ile). As IleRS can inadvertently accommodate and process structurally similar amino acids such as valine, to avoid such errors it has two additional distinct tRNA(Ile)-dependent editing activities. One activity is designated as 'pretransfer' editing and involves the hydrolysis of activated Val-AMP. The other activity is designated 'posttransfer' editing and involves deacylation of mischarged Val-tRNA(Ile). The chain is Isoleucine--tRNA ligase from Ralstonia pickettii (strain 12J).